Here is a 427-residue protein sequence, read N- to C-terminus: Enolase (427 aa).

Gln-163 contributes to the (2R)-2-phosphoglycerate binding site. Catalysis depends on Glu-205, which acts as the Proton donor. Mg(2+) contacts are provided by Asp-242, Glu-285, and Asp-312. Positions 337, 366, 367, and 388 each coordinate (2R)-2-phosphoglycerate. Lys-337 serves as the catalytic Proton acceptor.

The protein belongs to the enolase family. The cofactor is Mg(2+).

Its subcellular location is the cytoplasm. It is found in the secreted. It localises to the cell surface. The catalysed reaction is (2R)-2-phosphoglycerate = phosphoenolpyruvate + H2O. The protein operates within carbohydrate degradation; glycolysis; pyruvate from D-glyceraldehyde 3-phosphate: step 4/5. In terms of biological role, catalyzes the reversible conversion of 2-phosphoglycerate (2-PG) into phosphoenolpyruvate (PEP). It is essential for the degradation of carbohydrates via glycolysis. This is Enolase from Ralstonia pickettii (strain 12J).